The sequence spans 291 residues: Acetyl-coenzyme A carboxylase carboxyl transferase subunit beta (291 aa).

Positions valine 23–valine 291 constitute a CoA carboxyltransferase N-terminal domain. Residues cysteine 27, cysteine 30, cysteine 46, and cysteine 49 each coordinate Zn(2+). The C4-type zinc finger occupies cysteine 27–cysteine 49.

It belongs to the AccD/PCCB family. Acetyl-CoA carboxylase is a heterohexamer composed of biotin carboxyl carrier protein (AccB), biotin carboxylase (AccC) and two subunits each of ACCase subunit alpha (AccA) and ACCase subunit beta (AccD). It depends on Zn(2+) as a cofactor.

Its subcellular location is the cytoplasm. The catalysed reaction is N(6)-carboxybiotinyl-L-lysyl-[protein] + acetyl-CoA = N(6)-biotinyl-L-lysyl-[protein] + malonyl-CoA. Its pathway is lipid metabolism; malonyl-CoA biosynthesis; malonyl-CoA from acetyl-CoA: step 1/1. Its function is as follows. Component of the acetyl coenzyme A carboxylase (ACC) complex. Biotin carboxylase (BC) catalyzes the carboxylation of biotin on its carrier protein (BCCP) and then the CO(2) group is transferred by the transcarboxylase to acetyl-CoA to form malonyl-CoA. The sequence is that of Acetyl-coenzyme A carboxylase carboxyl transferase subunit beta from Coxiella burnetii (strain Dugway 5J108-111).